The sequence spans 359 residues: MGRKFQNKKKKAAPQLEIVPLDENPPLPPQRSSDDVVPKKARKEKWVNKQRVLVFSARGISHRDRHLMKDIKTLMPHHRPESKMERSKTLSVVNEMCEMKHCNKAMLFEGRRKRDLYMWISNTSGSTGPSAKFLIENIHTMAELKMTGNCLRGSRPLLSFDSKFDELPHLKLLKELFVQTYSVPNHHPKSQPFVDHVFTFTYLDKRIWFRNFQILSEDGGLSEVGPRYVMNPVKIFDGSFTGKTIWENPDYVSPSKQRQVLKKAAKDKYVNRVEQKVKHEATRPIRAYDGMDNDELFEDDDPVETAKILAAIAKKKKEEAAKQTPKSALTKKIKEKQLQAVKDVIERKKARTIKRVKKV.

The segment covering 1-12 (MGRKFQNKKKKA) has biased composition (basic residues). Residues 1–42 (MGRKFQNKKKKAAPQLEIVPLDENPPLPPQRSSDDVVPKKAR) form a disordered region. The Brix domain occupies 50-241 (QRVLVFSARG…PVKIFDGSFT (192 aa)).

This sequence belongs to the BRX1 family.

The protein localises to the nucleus. Its subcellular location is the nucleolus. Its function is as follows. Required for biogenesis of the 60S ribosomal subunit. The protein is Ribosome biogenesis protein BRX1 homolog of Drosophila melanogaster (Fruit fly).